Here is a 121-residue protein sequence, read N- to C-terminus: MVRATGSVASRRRRKRILKQAKGFWGDRKGHIRQSRSSVMRAMAFNYMHRKDRKGDFRSLWIARLNVASRIHSLSYSRLINGLKCANISLNRKMLSEIAIHNPEGFAEIANQAKKALEATV.

The protein belongs to the bacterial ribosomal protein bL20 family.

Binds directly to 23S ribosomal RNA and is necessary for the in vitro assembly process of the 50S ribosomal subunit. It is not involved in the protein synthesizing functions of that subunit. The polypeptide is Large ribosomal subunit protein bL20 (rplT) (Chlamydia pneumoniae (Chlamydophila pneumoniae)).